The chain runs to 153 residues: Mitochondrial zinc maintenance protein 1, mitochondrial (153 aa).

Belongs to the complex I LYR family. MZM1 subfamily. Interacts with RIP1.

It localises to the mitochondrion matrix. Functionally, assembly factor required for Rieske Fe-S protein RIP1 incorporation into the cytochrome b-c1 (CIII) complex. Functions as a chaperone, binding to this subunit within the mitochondrial matrix and stabilizing it prior to its translocation and insertion into the late CIII dimeric intermediate within the mitochondrial inner membrane. Modulates the mitochondrial matrix zinc pool. The chain is Mitochondrial zinc maintenance protein 1, mitochondrial (MZM1) from Ajellomyces capsulatus (strain G186AR / H82 / ATCC MYA-2454 / RMSCC 2432) (Darling's disease fungus).